The sequence spans 106 residues: MGKTNDWLDFDQLVEDSVRDALKPPSMYKVILVNDDYTPMEFVIDVLQKFFSYDVERATQLMLAVHYQGKAICGVFTAEVAETKVAMVNKYARENEHPLLCTLEKA.

It belongs to the ClpS family. Binds to the N-terminal domain of the chaperone ClpA.

Its function is as follows. Involved in the modulation of the specificity of the ClpAP-mediated ATP-dependent protein degradation. This is ATP-dependent Clp protease adapter protein ClpS from Salmonella agona (strain SL483).